Reading from the N-terminus, the 345-residue chain is Dihydroorotase (345 aa).

Zn(2+)-binding residues include His-14 and His-16. Residues 16 to 18 (HLR) and Asn-42 contribute to the substrate site. Residues Lys-102, His-139, and His-177 each coordinate Zn(2+). Lys-102 is modified (N6-carboxylysine). Substrate is bound at residue His-139. Leu-222 contacts substrate. Asp-250 is a Zn(2+) binding site. Asp-250 is a catalytic residue. The substrate site is built by His-254 and Ala-266.

The protein belongs to the metallo-dependent hydrolases superfamily. DHOase family. Class II DHOase subfamily. In terms of assembly, homodimer. Zn(2+) serves as cofactor.

It catalyses the reaction (S)-dihydroorotate + H2O = N-carbamoyl-L-aspartate + H(+). It functions in the pathway pyrimidine metabolism; UMP biosynthesis via de novo pathway; (S)-dihydroorotate from bicarbonate: step 3/3. In terms of biological role, catalyzes the reversible cyclization of carbamoyl aspartate to dihydroorotate. This is Dihydroorotase from Nitrosomonas eutropha (strain DSM 101675 / C91 / Nm57).